We begin with the raw amino-acid sequence, 235 residues long: UPF0758 protein Swol_1642 (235 aa).

Residues 109–235 form the MPN domain; the sequence is IIKSPEDVQE…YCSLKARGLI (127 aa). 3 residues coordinate Zn(2+): H184, H186, and D197. A JAMM motif motif is present at residues 184–197; it reads HNHPSGDPTPSQED.

It belongs to the UPF0758 family.

The sequence is that of UPF0758 protein Swol_1642 from Syntrophomonas wolfei subsp. wolfei (strain DSM 2245B / Goettingen).